We begin with the raw amino-acid sequence, 465 residues long: FAD-dependent oxidoreductase pigF (465 aa).

An N-terminal signal peptide occupies residues 1 to 17 (MMLLTLLILSSVGLAAA). N-linked (GlcNAc...) asparagine glycosylation is found at N95, N138, N260, and N327. A lipid anchor (GPI-anchor amidated aspartate) is attached at D444. Residues 445–465 (SASGIWNLTNAVVLPGLLTGL) constitute a propeptide, removed in mature form. N451 carries N-linked (GlcNAc...) asparagine glycosylation.

The protein belongs to the beta-cyclopiazonate dehydrogenase family. Requires FAD as cofactor.

It localises to the cell membrane. The protein operates within secondary metabolite biosynthesis. In terms of biological role, FAD-dependent oxidoreductase; part of the gene cluster that mediates the biosynthesis of azaphilone pigments (MonAzPs), a complex mixture of compounds with a common azaphilone skeleton very widely used as food colorants. Within the pathway, pigF desaturates C6(7) to afford the orange and red pigments from yellow pigments. The first step of the pathway is performed by the nrPKS pigA that forms the hexaketide precursor from successive condensations of five malonyl-CoA units, with a simple acetyl-CoA starter unit. The role of esterase pigG is not clear, but it may play at most a supplementary role in the formation of the benzaldehyde produced by the pigA nrPKS. This very reactive benzaldehyde is intercepted by the pigC ketoreductase that to provide the first stable enzyme-free MonAzPs intermediate, 6-(4-hydroxy-2-oxopentyl)-3-methyl-2,4-dioxocyclohexane carbaldehyde, also known as M7PKS-1. The FAD-dependent monooxygenase pigN hydroxylates M7PKS-1 at C-4, which triggers the formation of the pyran ring. PigJ, pigK and pigD are involved in the acetylation of the pyran ring. PigJ and pigK form the two subunits of a dedicated fungal FAS that produces the side chain fatty acyl moiety of MonAzPs and pigD transfers the fatty acyl chain to the C-4 alcohol. PigM and pigO are involved in the elimination of the omega-1 alcohol. PigM acts as an O-acetyltransferase that synthesizes the putative O-11 acetyl intermediate whereas pigO eliminates acetic acid to yield an intermediate with a C10(11) double bond. The dehydration of the C-11 alcohol followed by the reduction of the C6(7) double bond by the NAD(P)H-dependent oxidoreductase pigE increases the electrophilicity of the C-5 ketone of the resulting acyl benzopyran. This in turn sets up the C-5 ketone for an intramolecular Knoevenagel aldol condensation with the C-20 enol of the side chain. This condensation affords the characteristic linear tricyclic carbon skeletons of the yellow pigments that serve as the common precursors for the classical yellow pigments monascin and ankaflavin, orange pigments rubopunctatin and monascorubrin, and red pigments ribropunctamine and monascorubramine. The FAD-dependent oxidoreductase pigF is especially invoved in the biosynthesis of orange and red pigments via desaturation of C6(7). This Monascus ruber (Mold) protein is FAD-dependent oxidoreductase pigF.